The chain runs to 126 residues: Putative lipoprotein LprD (126 aa).

The N-terminal stretch at 1–19 (MSTTRRRRPALVALVTIAA) is a signal peptide. A lipid anchor (N-palmitoyl cysteine) is attached at Cys-20. A lipid anchor (S-diacylglycerol cysteine) is attached at Cys-20. Residues 44–64 (GYALQWPLFAGFCLYTYHNFV) traverse the membrane as a helical segment.

This sequence to M.tuberculosis Rv1343c.

The protein localises to the cell membrane. The protein is Putative lipoprotein LprD (lprD) of Mycobacterium leprae (strain TN).